The sequence spans 971 residues: UPF0182 protein RER_22310 (971 aa).

7 helical membrane passes run 16–36, 61–81, 112–132, 172–192, 209–229, 257–277, and 286–306; these read ILLV…RLIG, FVLF…AMLL, LFGV…AQAN, WLFV…YVFG, VQLA…YWFD, AKLI…ASIF, and MAVA…PMIV. The interval 890 to 927 is disordered; that stretch reads GSAATVTQPAPDPDTGAQPETPTTPTAPAPPASSDDVT.

Belongs to the UPF0182 family.

The protein resides in the cell membrane. The sequence is that of UPF0182 protein RER_22310 from Rhodococcus erythropolis (strain PR4 / NBRC 100887).